A 1551-amino-acid polypeptide reads, in one-letter code: MERRLRALEQLARGEAGGCPGLDGLLDLLLALHHELSSGPLRRERSVAQFLSWASPFVSKVKELRLQRDDFEILKVIGRGAFGEVTVVRQRDTGQIFAMKMLHKWEMLKRAETACFREERDVLVKGDSRWVTTLHYAFQDEEYLYLVMDYYAGGDLLTLLSRFEDRLPPELAQFYLAEMVLAIHSLHQLGYVHRDVKPDNVLLDVNGHIRLADFGSCLRLNTNGMVDSSVAVGTPDYISPEILQAMEEGKGHYGPQCDWWSLGVCAYELLFGETPFYAESLVETYGKIMNHEDHLQFPPDVPDVPASAQDLIRQLLCRQEERLGRGGLDDFRNHPFFEGVDWERLASSTAPYIPELRGPMDTSNFDVDDDTLNHPGTLPPPSHGAFSGHHLPFVGFTYTSGSHSPESSSEAWAALERKLQCLEQEKVELSRKHQEALHAPTDHRELEQLRKEVQTLRDRLPEMLRDKASLSQTDGPPAGSPGQDSDLRQELDRLHRELAEGRAGLQAQEQELCRAQGQQEELLQRLQEAQEREAATASQTRALSSQLEEARAAQRELEAQVSSLSRQVTQLQGQWEQRLEESSQAKTIHTASETNGMGPPEGGPQEAQLRKEVAALREQLEQAHSHRPSGKEEALCQLQEENRRLSREQERLEAELAQEQESKQRLEGERRETESNWEAQLADILSWVNDEKVSRGYLQALATKMAEELESLRNVGTQTLPARPLDHQWKARRLQKMEASARLELQSALEAEIRAKQGLQERLTQVQEAQLQAERRLQEAEKQSQALQQELAMLREELRARGPVDTKPSNSLIPFLSFRSSEKDSAKDPGISGEATRHGGEPDLRPEGRRSLRMGAVFPRAPTANTASTEGLPAKPGSHTLRPRSFPSPTKCLRCTSLMLGLGRQGLGCDACGYFCHTTCAPQAPPCPVPPDLLRTALGVHPETGTGTAYEGFLSVPRPSGVRRGWQRVFAALSDSRLLLFDAPDLRLSPPSGALLQVLDLRDPQFSATPVLASDVIHAQSRDLPRIFRVTTSQLAVPPTTCTVLLLAESEGERERWLQVLGELQRLLLDARPRPRPVYTLKEAYDNGLPLLPHTLCAAILDQDRLALGTEEGLFVIHLRSNDIFQVGECRRVQQLTLSPSAGLLVVLCGRGPSVRLFALAELENIEVAGAKIPESRGCQVLAAGSILQARTPVLCVAVKRQVLCYQLGPGPGPWQRRIRELQAPATVQSLGLLGDRLCVGAAGGFALYPLLNEAAPLALGAGLVPEELPPSRGGLGEALGAVELSLSEFLLLFTTAGIYVDGAGRKSRGHELLWPAAPMGWGYAAPYLTVFSENSIDVFDVRRAEWVQTVPLKKVRPLNPEGSLFLYGTEKVRLTYLRNQLAEKDEFDIPDLTDNSRRQLFRTKSKRRFFFRVSEEQQKQQRREMLKDPFVRSKLISPPTNFNHLVHVGPANGRPGARDKSPAPEEKGRVARGSGPQRPHSFSEALRRPASMGSEGLGGDADPMKRKPWTSLSSESVSCPQGSLSPATSLMQVSERPRSLPLSPELESSP.

In terms of domain architecture, Protein kinase spans 71–337 (FEILKVIGRG…LDDFRNHPFF (267 aa)). ATP contacts are provided by residues 77 to 85 (IGRGAFGEV) and Lys-100. Residue Asp-195 is the Proton acceptor of the active site. Ser-216 and Ser-228 each carry phosphoserine; by autocatalysis. Thr-234 is subject to Phosphothreonine; by autocatalysis. An AGC-kinase C-terminal domain is found at 338–408 (EGVDWERLAS…TSGSHSPESS (71 aa)). 2 coiled-coil regions span residues 406-678 (ESSS…SNWE) and 730-802 (KARR…RARG). Disordered regions lie at residues 467-486 (KASL…QDSD), 655-675 (ELAQ…ETES), 801-849 (RGPV…PEGR), and 863-886 (TANT…PRSF). Residues 655–674 (ELAQEQESKQRLEGERRETE) show a composition bias toward basic and acidic residues. Residues 835 to 849 (ATRHGGEPDLRPEGR) are compositionally biased toward basic and acidic residues. A Phorbol-ester/DAG-type zinc finger spans residues 878–927 (SHTLRPRSFPSPTKCLRCTSLMLGLGRQGLGCDACGYFCHTTCAPQAPPC). The PH domain occupies 947–1066 (GTAYEGFLSV…WLQVLGELQR (120 aa)). The 275-residue stretch at 1092–1366 (LPHTLCAAIL…RPLNPEGSLF (275 aa)) folds into the CNH domain. The region spanning 1437 to 1450 (ISPPTNFNHLVHVG) is the CRIB domain. Residues 1442-1551 (NFNHLVHVGP…PLSPELESSP (110 aa)) form a disordered region. Residues 1457–1470 (GARDKSPAPEEKGR) show a composition bias toward basic and acidic residues. The residue at position 1482 (Ser-1482) is a Phosphoserine. Residues 1511–1533 (TSLSSESVSCPQGSLSPATSLMQ) are compositionally biased toward polar residues. A compositionally biased stretch (low complexity) spans 1540–1551 (SLPLSPELESSP).

It belongs to the protein kinase superfamily. AGC Ser/Thr protein kinase family. DMPK subfamily. In terms of assembly, homodimer and homotetramer via the coiled coil regions. Interacts tightly with GTP-bound but not GDP-bound CDC42. The cofactor is Mg(2+). Expressed in heart and skeletal muscle.

It is found in the cytoplasm. The enzyme catalyses L-seryl-[protein] + ATP = O-phospho-L-seryl-[protein] + ADP + H(+). The catalysed reaction is L-threonyl-[protein] + ATP = O-phospho-L-threonyl-[protein] + ADP + H(+). With respect to regulation, maintained in an inactive, closed conformation by an interaction between the kinase domain and the negative autoregulatory C-terminal coiled-coil region. Agonist binding to the phorbol ester binding site disrupts this, releasing the kinase domain to allow N-terminus-mediated dimerization and kinase activation by transautophosphorylation. Functionally, may act as a downstream effector of CDC42 in cytoskeletal reorganization. Contributes to the actomyosin contractility required for cell invasion, through the regulation of MYPT1 and thus MLC2 phosphorylation. This Homo sapiens (Human) protein is Serine/threonine-protein kinase MRCK gamma.